Consider the following 30-residue polypeptide: NADH-ubiquinone oxidoreductase 18 kDa subunit (30 aa).

In terms of assembly, complex I is composed of about 45 different subunits.

It localises to the mitochondrion inner membrane. The catalysed reaction is a ubiquinone + NADH + 5 H(+)(in) = a ubiquinol + NAD(+) + 4 H(+)(out). Functionally, transfer of electrons from NADH to the respiratory chain. The immediate electron acceptor for the enzyme is believed to be ubiquinone. The protein is NADH-ubiquinone oxidoreductase 18 kDa subunit of Solanum tuberosum (Potato).